A 360-amino-acid polypeptide reads, in one-letter code: Peptide chain release factor 1 (360 aa).

An N5-methylglutamine modification is found at Gln235. The span at 285–295 shows a compositional bias: basic and acidic residues; it reads RQAAEQADTRR. Positions 285–309 are disordered; sequence RQAAEQADTRRNLLGSGDRSDKIRT.

The protein belongs to the prokaryotic/mitochondrial release factor family. Post-translationally, methylated by PrmC. Methylation increases the termination efficiency of RF1.

It is found in the cytoplasm. Its function is as follows. Peptide chain release factor 1 directs the termination of translation in response to the peptide chain termination codons UAG and UAA. In Actinobacillus pleuropneumoniae serotype 7 (strain AP76), this protein is Peptide chain release factor 1.